The primary structure comprises 117 residues: uncharacterized protein (117 aa).

An N-terminal signal peptide occupies residues 1–38 (MIIDSSRIPSFTQLHSTMTRAPLLLLCVALVLLGHVNG).

The protein resides in the secreted. This is an uncharacterized protein from Homo sapiens (Human).